Here is a 415-residue protein sequence, read N- to C-terminus: Serine hydroxymethyltransferase (415 aa).

(6S)-5,6,7,8-tetrahydrofolate contacts are provided by residues leucine 117 and glycine 121 to leucine 123. Residue lysine 226 is modified to N6-(pyridoxal phosphate)lysine. Residues glutamate 241 and serine 349–phenylalanine 351 contribute to the (6S)-5,6,7,8-tetrahydrofolate site.

It belongs to the SHMT family. In terms of assembly, homodimer. Requires pyridoxal 5'-phosphate as cofactor.

It localises to the cytoplasm. It catalyses the reaction (6R)-5,10-methylene-5,6,7,8-tetrahydrofolate + glycine + H2O = (6S)-5,6,7,8-tetrahydrofolate + L-serine. The protein operates within one-carbon metabolism; tetrahydrofolate interconversion. Its pathway is amino-acid biosynthesis; glycine biosynthesis; glycine from L-serine: step 1/1. In terms of biological role, catalyzes the reversible interconversion of serine and glycine with tetrahydrofolate (THF) serving as the one-carbon carrier. This reaction serves as the major source of one-carbon groups required for the biosynthesis of purines, thymidylate, methionine, and other important biomolecules. Also exhibits THF-independent aldolase activity toward beta-hydroxyamino acids, producing glycine and aldehydes, via a retro-aldol mechanism. This Geobacter metallireducens (strain ATCC 53774 / DSM 7210 / GS-15) protein is Serine hydroxymethyltransferase.